Here is a 68-residue protein sequence, read N- to C-terminus: Large ribosomal subunit protein uL30 (68 aa).

The protein belongs to the universal ribosomal protein uL30 family. As to quaternary structure, part of the 50S ribosomal subunit.

This Bartonella henselae (strain ATCC 49882 / DSM 28221 / CCUG 30454 / Houston 1) (Rochalimaea henselae) protein is Large ribosomal subunit protein uL30.